The sequence spans 230 residues: LexA repressor (230 aa).

Positions 1 to 21 (MSDDSSETRTGGRRGADAGLT) are disordered. Positions 44-64 (IREIGDAVGLTSTSSVAHQLR) form a DNA-binding region, H-T-H motif. Active-site for autocatalytic cleavage activity residues include serine 154 and lysine 191.

Belongs to the peptidase S24 family. In terms of assembly, homodimer.

It carries out the reaction Hydrolysis of Ala-|-Gly bond in repressor LexA.. Represses a number of genes involved in the response to DNA damage (SOS response), including recA and lexA. In the presence of single-stranded DNA, RecA interacts with LexA causing an autocatalytic cleavage which disrupts the DNA-binding part of LexA, leading to derepression of the SOS regulon and eventually DNA repair. The polypeptide is LexA repressor (Mycobacterium sp. (strain JLS)).